The chain runs to 469 residues: Probable periplasmic serine endoprotease DegP-like (469 aa).

The first 25 residues, 1 to 25, serve as a signal peptide directing secretion; that stretch reads MKVCQKYTAVLLVWLSAVVSMRAGA. Catalysis depends on charge relay system residues His-108, Asp-138, and Ser-211. Residues 209–211 and 266–270 contribute to the substrate site; these read GNS and LGVLI. 2 PDZ domains span residues 255-346 and 352-457; these read LKDT…VRRG and AVEI…IRQG.

The protein belongs to the peptidase S1C family.

The protein resides in the periplasm. It catalyses the reaction Acts on substrates that are at least partially unfolded. The cleavage site P1 residue is normally between a pair of hydrophobic residues, such as Val-|-Val.. Its function is as follows. Might be efficient in the degradation of transiently denatured and unfolded proteins which accumulate in the periplasm following stress conditions. This chain is Probable periplasmic serine endoprotease DegP-like (mucD), found in Hahella chejuensis (strain KCTC 2396).